Here is a 4194-residue protein sequence, read N- to C-terminus: MKAERDTESIAGGREPIAVVGSGMRFPGSSSSPSKLWKLLLKPRDLLSRIPENRFNADSFYHPNSSHHGTTDVQESYFLEEDHRHFDAAFFNIKPVEAHAIDPQQRVLMEVVYESLEASGMTMESLAGSPTGVYVGLMCADYAELVNSDVNALPTYTPTGNARSIMSNRISYFFDWHGPSMTIDTACSSSLVAVHEAVQLLRSGDSDVAIAAGSNLMLAPLQYIAASKLKMLSADSRSRMWDANASGYARGEGVAAVVLKRLSSAIADGDHIECIIRETAINQDGRTKGITMPSSKAQADLIAKTYAKAGLDPRNPDQRCQYFEAHGTGTAAGDPKEAEAISKAFFHPGEVVSGASDPLYVGSIKTVIGHTEGTAGLAGLLRASLAVQHGTIPPNMLFDSLHPNVEPFYTNLKIATEPTAWPKLAEGTSRRCSINSFGFGGTNAHAIVENYVPPAPVQVSQASPGRQFTPFTFSAASERSLRGVLADYAEHLRLHPDISLHDLAYTLHARRSGHAVRTHVSADSVADLHTKIDGLLRAPTSSDGGSRNLGLRSRPWSSPLRALGVFTGQGAQWATMGRELVLHSQYCRDLVRDVDRMLQLLPEAERPDWSVMDQVTCDAPLSRIDSAVISQPLCTVVQIMLFDLLTSAGVRFQAVVGHSSGEIAAAYAAGYLTRDDAVKVAYYRGYFTSLTPSDRPGAMMAVGTSAEDANELCNLSMFKGRLAVAAINSSSSVTISGDRDAVEQAKEVLEDEKKFARILKVDKAYHSHHMLPCAEEYLRALERSGINPLQGRDDCVWHSSTYENRHVHGARDLAGQYWADNMVRPVLFSHCVDAAAAGSEARFDFAVELGPHPTLKGPALQTIQEAHKVTVPYTGLLQRGKDDVQAFSDALGYLWSQFSPSIVDLGAFDTLVSGIKSRKMLQDLPAYHWDHDNIFWHKSRPTKAFLTQKSIPHPLLGTRTTDVMDEQIRWRNHLLLNELPWIRGHQLQGQVIYPATAYLSTAIEAAMFLVPEGASAQLVEVRDFNLGKPLIFGEDGSGIETVFTLSDITKGEDKTYSASFTYHACSNADAEQLSTHATGRVIVITGEASAGLLPSQSKDLPNLVDIPEDRFYKSLETVGYGYSGDFRAMSSIQRKLNFSSSRVRVPLQEDDRVKLMLHPAMLDTALQGIFLAYCWPGDGSLDQLHVPTGIQSCRVNAGLCRQQLESATEVTSSSQLTGNPLVTKNLNGNVEISTEDGSCLVQMEGLKVVSFSEPTAEADRAVFTEYVWDVLAPDAERAMQGKRATAEDYELAFAIERVSVYYMRQLASLFPEETRSSLNLEWHFVCLFNFITHVLSTTGAGQRKTAKKEWLQDSAADIERIKERYADTVDMRLARAVGDNLPAVIRGETTMLEHITKDNLLDRFYEVGLGLKEFSGYVGKTVEQVVHRHPHMKMLEIGAGTGGATKVIMGGIGRAFSSYTYTDISPNFFETASEVFSSVADKMIFKTLDVEKDIVQQGYEEHSYDLVVASLVLHATKNLKQTLANTRRLLRPGGYLVIQEVCNNEPSRTGFMMCALPGWWLGQDDGRKLSPCVSTPEWNDLLLQTGFSGVDSTTHELDSVPFQLAVIVSQAVDERVSLLREPLALVGTDSPVAEHWDLVLVGGQSPKSSHLIEEIVGMLQSPNVSHTIVKTVDDIDSSTISETTAILFLEELDKPVFKGITERTLEGLKRLFETQRTVLWVTQGSRSADPYMGMSVGLGRTLILENPDLVLQFLDLEPGIEPEARTILEALLRLRQSDRWAKEGGTFEDVLWTNEHELAYINGELCLSRVHLAAPLNDRFNASKRTVLEAMNPQSVPMNLSLGQTIAPGLVLNDHLASKMLGSPDAVESESETVIRVSHSLLMPDLATIPPSYLVLGTNTGQNGRIVLAISETNGSYASVPPGRVLDVAPLQGEEPLLLSRLHTQLQVDGMLSICEDGSVLAIHEPPVDLASAIVERGASLGIHVYITTAASPSDRSWTQVHSYSPRTVVKSLLPPDISVFIDCSTRSLSQRAGSLIASCLPETCLKTTSASLPSLRRIRGFSVADMIDNLKGALPRALEKLAAPESSTNTLPLIRADQLGPGSSDADLFTPAIVAWNTTGKVPVQVSTVDSHTTFRSDRTYVFFGLTSDLAQSICDWMVTHGARNIVLTSRHPNIDARWKRTLKEAGVRVEVFSNDITDKAALVSLVDHIRQNLPPIAGIAHGAMVLNDVSFFEMTFEKMIQVIRPKVQGAIYLDELFQEPTLDFCIFFSSCTAIAGNRGQSAYTAANMFMSSLASQRREKGLAGSILHIGAVMGVGYINRGFKDYIFTALSRAGYMMVTEREFHLCFGEAVLASHPKSGRNPDVVTALETSKFGDTLPLWAKFPRFQYCLAAADSGSLKQAQKKHNAAVSTKLRLAEATTAEEALEIVQDSFYQKLQVVLQISPDTEKSQVLASGTDDLGIDSLVAVEIRSWFIKEIDTEIAVFKVLSGISIAELVEFAVENMPGELTPNMSDSLNAVPETPTAPVIPASPPSGSVSSAPSSDPPKTTAETSQHLSESSSKTSQPDEKQSEERDSSTASLEEPLETAYEKVLPVSPGQARFWFLKHLMEDQTTANNTILVSVQGQVRLDSLDAAVRRVGARHESLRTSFFVDKNQKAVQAISDSSRLYLQTKEIHSEAQVEAEFEALKNHAYDLINGECMQLIHLGMNATESYLLIGSHHIVMDGISLEVFLNDVQKAYNGQSLSSQVYQYSDYSEKLRQELGNGAMQKEIEYWRSEFAEAPTPLPLLPFAAVKQRKALTAYRHTSVSRTVDAKVARQISDTCRKLKANVFHFYLGVFEVLLFKLFGKNDVCIGMADANRWDDQVAQSIGMYLNLLPLRFRLDKQQSFETVLKDTRRKAYNAMSNSRLPFDALLDNLNCDRSTAFSPLFQAFINYRQGVRENRTLGSARGVTKKISLPRAGYDMSLDIIENPGGDTRLAFMLQDALYSEEETAQVLELYCNLLSELSGSPGQILKDVSLFTRSDVDKAVQLGRGAALPSQGSETLVHRIDAMIANPPQEIALRDHTGRSWTWEQLGQQVNRMASTLLQVNVTAGSVIAVHQEASPDLVFSLLAILRVGGIYVPLDSNLPEARLRSIITECDPSVLLLDQTTLARAGDLALPPSVTVLDVSSLPPRVKDAICPTTARRATDPAAILFTSGSTGVPKGVILSHGGLRNHVEALVHTHGFGRETVLQQSSVGFDMSLNQIFMSLANGGTLVLVPEPFRKDSAAVAKMILEQNITYTSATPSEYLAWLRHGSNSLFQSTSWRFATAGGEQFTPQLLEAFQTLGTQFEHPFHAFNAYGPTECTLSSNEMKVSLEASSSARQITAGKALPNCSFYVVDDSLDPLPVGWPGEILIGGAGVALGYLNNPAETARKFLVDPKASSSAMGQGWGRMYRTGDKGVLRPDGTLQILGRIEGDTQIKLRGLRIEMQDVEKSILDASEGQISEVGVTPRGDPTILVAHVVLSRNASFSNKQQYLRDLSASLPLPQYMRPAAIIPIDCMPLTASGKVDRRALQGLELSSTRGQSHIQDQGAATQLTEAESELAQIWKDVLPQQLQEVHLIDGASDFFQVGGNSMLLIELRRLVASRLQVDIPLLRLFESSTLGAMAAVIQDLSTVAQVPEVGWEAETQVPSSWAQGDVQPAHLQSHSSPRTVVITGATGFLGKQLVRLLVANANIHRVHCIAVRNVEKLAEFAGSDKVSIHPGDLAQPRCGLSEADAVSIFRSTDAIIHNGADVSFLKSYSSLRAPNVLSTKELVKLSLPRLIPLHYVSTATVGKLNRSDTLAPESLARFPPGATFSDGYAASKWASEVFLENATKKLGLPTFIHRPSSITGDQAAENDIVPNLLKYSSLIKALPDTAKWSGYVDLISVERAAAGIIGSVLQDRPDLGTTAPETQFLHQTGEKVIPAQSIKAVLSPKDEPEWDSLAMAEWVSRAVQKGMNPLIGEFLLSVDRGQGLSVGQKLLLKTDQAKKGMNFSTSERLQCRRDKTNPGRQVCDQGPSSVHPQPAFHRGRDVSPRHPALDHPDPIQGRSHVPHVRETEQQTDGVPRHGARGSKLISTDEQIDDAESVVDGVDHDEDPAPPQASRCPPSWEVGVCALAEGRLHPGSEDEVLVKSKGEYPCGSDGREEAEEAEWQCDEGHGDGEPDD.

In terms of domain architecture, Ketosynthase family 3 (KS3) spans 14–450 (REPIAVVGSG…GTNAHAIVEN (437 aa)). Active-site for beta-ketoacyl synthase activity residues include C187, H326, and H370. In terms of domain architecture, Malonyl-CoA:ACP transacylase (MAT) spans 565–887 (VFTGQGAQWA…QRGKDDVQAF (323 aa)). An N-terminal hotdog fold region spans residues 953–1088 (HPLLGTRTTD…GRVIVITGEA (136 aa)). One can recognise a PKS/mFAS DH domain in the interval 953–1257 (HPLLGTRTTD…VVSFSEPTAE (305 aa)). The Proton acceptor; for dehydratase activity role is filled by H985. Positions 1103–1257 (LVDIPEDRFY…VVSFSEPTAE (155 aa)) are C-terminal hotdog fold. D1163 functions as the Proton donor; for dehydratase activity in the catalytic mechanism. The tract at residues 1302 to 1596 (YMRQLASLFP…FSGVDSTTHE (295 aa)) is methyltransferase (cMeT) domain. In terms of domain architecture, Ketoreductase (KR) spans 2141–2314 (TYVFFGLTSD…AGSILHIGAV (174 aa)). Residues 2421-2505 (TTAEEALEIV…ELVEFAVENM (85 aa)) enclose the Carrier 1 domain. S2465 is modified (O-(pantetheine 4'-phosphoryl)serine). Residues 2512 to 2583 (NMSDSLNAVP…ERDSSTASLE (72 aa)) form a disordered region. Over residues 2526–2547 (APVIPASPPSGSVSSAPSSDPP) the composition is skewed to low complexity. A compositionally biased stretch (polar residues) spans 2550-2565 (TAETSQHLSESSSKTS). Positions 2566 to 2577 (QPDEKQSEERDS) are enriched in basic and acidic residues. Residues 2591 to 3023 (EKVLPVSPGQ…QILKDVSLFT (433 aa)) form a condensation region. The segment at 3056-3467 (ANPPQEIALR…RIEGDTQIKL (412 aa)) is adenylation. The region spanning 3580-3660 (TQLTEAESEL…AMAAVIQDLS (81 aa)) is the Carrier 2 domain. S3620 carries the post-translational modification O-(pantetheine 4'-phosphoryl)serine. One can recognise a Thioester reductase (TE) domain in the interval 3701–3920 (ITGATGFLGK…VDLISVERAA (220 aa)). 2 disordered regions span residues 4031–4110 (RRDK…DEQI) and 4163–4194 (KGEY…EPDD). Residues 4057–4072 (RGRDVSPRHPALDHPD) show a composition bias toward basic and acidic residues. Residues 4174 to 4183 (EEAEEAEWQC) are compositionally biased toward acidic residues. Residues 4184 to 4194 (DEGHGDGEPDD) show a composition bias toward basic and acidic residues.

This sequence in the C-terminal section; belongs to the NRP synthetase family. It depends on pantetheine 4'-phosphate as a cofactor.

It functions in the pathway mycotoxin biosynthesis. Hybrid PKS-NRPS synthetase; part of the gene cluster that mediates the biosynthesis of pyrrocidines, fungal natural products containing a macrocyclic para-cyclophane connected to a decahydrofluorene ring system that show potent antibiotic activities toward Gram-negative bacteria. Within the pathway, the PKS-NRPS pydA, with the help of the trans-enoyl reductase pydC, synthesize the polyketide-tyrosyl acyl thioester product which can be reductively off-loaded by the terminal reductase (R) domain in pydA. The PKS module of pydA acts in combination with the trans-acting enoyl reductase pydC to produce a methylated polyketide attached to the ACP domain. In parallel, the adenylation (A) domain of the NRPS module activated L-tyrosine, which is then transferred to the ACP domain. The condensation (C) domain subsequently link this group to the polyketide chain, forming an enzyme-bound amide. The alpha/beta hydrolase pydG is then required to catalyze the subsequent Knoevenagel condensation that affords the 3-pyrrolin-2-one ring, whereas the four proteins pydB, pydE, pydX and pydZ then function synergistically to form the cyclophane. PydB and the membrane-bound pydX and pydZ are lipid-binding proteins that can sequester and mold the pdyG product into the inverse S-shape. Binding of the medium chain reductase pydE to the complex would trigger the cascade oxidative cyclization. PydY is involved in the Diels-Alder cycloaddition that forms the decahydrofluorene core. Additional non-enzymatic hydroxylation yields pyrrocidine A2 which can be further reduced into pyrrocidine B by an endogenous reductase. This chain is Hybrid PKS-NRPS synthetase pydA, found in Acremonium sp.